A 443-amino-acid chain; its full sequence is Tol-Pal system protein TolB (443 aa).

The signal sequence occupies residues 1–33; that stretch reads MKIGIINTKIRTVFSAFACMIAASLVCTMPARA.

This sequence belongs to the TolB family. In terms of assembly, the Tol-Pal system is composed of five core proteins: the inner membrane proteins TolA, TolQ and TolR, the periplasmic protein TolB and the outer membrane protein Pal. They form a network linking the inner and outer membranes and the peptidoglycan layer.

Its subcellular location is the periplasm. Functionally, part of the Tol-Pal system, which plays a role in outer membrane invagination during cell division and is important for maintaining outer membrane integrity. In Brucella ovis (strain ATCC 25840 / 63/290 / NCTC 10512), this protein is Tol-Pal system protein TolB.